Consider the following 545-residue polypeptide: Chaperonin GroEL (545 aa).

ATP is bound by residues 30–33 (TLGP), K51, 87–91 (DGTTT), G415, and D495.

Belongs to the chaperonin (HSP60) family. As to quaternary structure, forms a cylinder of 14 subunits composed of two heptameric rings stacked back-to-back. Interacts with the co-chaperonin GroES.

It is found in the cytoplasm. It catalyses the reaction ATP + H2O + a folded polypeptide = ADP + phosphate + an unfolded polypeptide.. In terms of biological role, together with its co-chaperonin GroES, plays an essential role in assisting protein folding. The GroEL-GroES system forms a nano-cage that allows encapsulation of the non-native substrate proteins and provides a physical environment optimized to promote and accelerate protein folding. The sequence is that of Chaperonin GroEL from Shewanella sp. (strain MR-7).